Consider the following 339-residue polypeptide: Holliday junction branch migration complex subunit RuvB (339 aa).

Residues 2-187 (KDVNDEERII…FGIIEHMQYY (186 aa)) form a large ATPase domain (RuvB-L) region. Residues Leu26, Arg27, Gly68, Lys71, Thr72, Thr73, 134–136 (EDF), Arg177, Tyr187, and Arg224 contribute to the ATP site. Thr72 provides a ligand contact to Mg(2+). Residues 188-258 (SIDDLEKIIQ…TTKHSLHLLE (71 aa)) form a small ATPAse domain (RuvB-S) region. Positions 261-339 (DEGLDQTDRK…QLGYPPKKAE (79 aa)) are head domain (RuvB-H). The DNA site is built by Arg316 and Arg321.

Belongs to the RuvB family. Homohexamer. Forms an RuvA(8)-RuvB(12)-Holliday junction (HJ) complex. HJ DNA is sandwiched between 2 RuvA tetramers; dsDNA enters through RuvA and exits via RuvB. An RuvB hexamer assembles on each DNA strand where it exits the tetramer. Each RuvB hexamer is contacted by two RuvA subunits (via domain III) on 2 adjacent RuvB subunits; this complex drives branch migration. In the full resolvosome a probable DNA-RuvA(4)-RuvB(12)-RuvC(2) complex forms which resolves the HJ.

It localises to the cytoplasm. The catalysed reaction is ATP + H2O = ADP + phosphate + H(+). Its function is as follows. The RuvA-RuvB-RuvC complex processes Holliday junction (HJ) DNA during genetic recombination and DNA repair, while the RuvA-RuvB complex plays an important role in the rescue of blocked DNA replication forks via replication fork reversal (RFR). RuvA specifically binds to HJ cruciform DNA, conferring on it an open structure. The RuvB hexamer acts as an ATP-dependent pump, pulling dsDNA into and through the RuvAB complex. RuvB forms 2 homohexamers on either side of HJ DNA bound by 1 or 2 RuvA tetramers; 4 subunits per hexamer contact DNA at a time. Coordinated motions by a converter formed by DNA-disengaged RuvB subunits stimulates ATP hydrolysis and nucleotide exchange. Immobilization of the converter enables RuvB to convert the ATP-contained energy into a lever motion, pulling 2 nucleotides of DNA out of the RuvA tetramer per ATP hydrolyzed, thus driving DNA branch migration. The RuvB motors rotate together with the DNA substrate, which together with the progressing nucleotide cycle form the mechanistic basis for DNA recombination by continuous HJ branch migration. Branch migration allows RuvC to scan DNA until it finds its consensus sequence, where it cleaves and resolves cruciform DNA. The sequence is that of Holliday junction branch migration complex subunit RuvB from Lactobacillus gasseri (strain ATCC 33323 / DSM 20243 / BCRC 14619 / CIP 102991 / JCM 1131 / KCTC 3163 / NCIMB 11718 / NCTC 13722 / AM63).